We begin with the raw amino-acid sequence, 400 residues long: Zinc finger protein 514 (400 aa).

Residues 1–72 form the KRAB domain; sequence MTFEDVAVEF…EREISTGAHS (72 aa). 7 consecutive C2H2-type zinc fingers follow at residues 204–226, 232–254, 260–282, 288–310, 316–338, 344–366, and 372–394; these read CKCNECGKSFHFQSELRRHQRCH, YECSDCGRAFGHISSLIKHQRTH, YECSECGRAFSQSSSLVLHYRFH, YKCNECGRAFGHTSSLIKHQRTH, YECRECGRTFSQSSSLIVHYRFH, YKCNKCGRAFSQSSSLTQHYRFH, and YKCNECGRAFAHTASLIKHQRSH.

The protein belongs to the krueppel C2H2-type zinc-finger protein family.

It is found in the nucleus. Its function is as follows. May be involved in transcriptional regulation. The polypeptide is Zinc finger protein 514 (ZNF514) (Homo sapiens (Human)).